The chain runs to 430 residues: Protein translocase subunit SecY (430 aa).

Transmembrane regions (helical) follow at residues V18 to G38, F67 to L87, I118 to G138, V145 to L165, G177 to I197, I213 to V233, V270 to F290, P309 to I329, F369 to A389, and D390 to L410.

Belongs to the SecY/SEC61-alpha family. In terms of assembly, component of the Sec protein translocase complex. Heterotrimer consisting of SecY, SecE and SecG subunits. The heterotrimers can form oligomers, although 1 heterotrimer is thought to be able to translocate proteins. Interacts with the ribosome. Interacts with SecDF, and other proteins may be involved. Interacts with SecA.

It is found in the cell membrane. Its function is as follows. The central subunit of the protein translocation channel SecYEG. Consists of two halves formed by TMs 1-5 and 6-10. These two domains form a lateral gate at the front which open onto the bilayer between TMs 2 and 7, and are clamped together by SecE at the back. The channel is closed by both a pore ring composed of hydrophobic SecY resides and a short helix (helix 2A) on the extracellular side of the membrane which forms a plug. The plug probably moves laterally to allow the channel to open. The ring and the pore may move independently. This chain is Protein translocase subunit SecY, found in Halalkalibacterium halodurans (strain ATCC BAA-125 / DSM 18197 / FERM 7344 / JCM 9153 / C-125) (Bacillus halodurans).